A 313-amino-acid chain; its full sequence is MPTPKAFTLLGPTACGKTALALKIAETLPVEIISLDSALLYTGMDIGTAKPSASERAFVPHHLIDIITPVQTYSAARFVEDCTRLTGEITARGKCPLIVGGTMMYFRALTQGLNDLPEADACLRADLDEQKQMYGLDFLYRTLQKVDPETACRLKPNDSQRIGRALEVYYLTGRPMSAHLNGQPEHTLPFELYTAALIPEDRARLHENIALRFHLMLEQGFIGEVENLRRRYPGLTADSPAIRCVGYRQAWEHLDGATDRQTFIEKGIAATRQLAKRQLTWLRKTPLDCVADPFSDGTSGTRLIEAAKRFFGE.

11–18 provides a ligand contact to ATP; the sequence is GPTACGKT. A substrate-binding site is contributed by 13–18; it reads TACGKT. 3 interaction with substrate tRNA regions span residues 36–39, 160–164, and 243–248; these read DSAL, QRIGR, and RCVGYR.

It belongs to the IPP transferase family. Monomer. Mg(2+) is required as a cofactor.

The catalysed reaction is adenosine(37) in tRNA + dimethylallyl diphosphate = N(6)-dimethylallyladenosine(37) in tRNA + diphosphate. Its function is as follows. Catalyzes the transfer of a dimethylallyl group onto the adenine at position 37 in tRNAs that read codons beginning with uridine, leading to the formation of N6-(dimethylallyl)adenosine (i(6)A). The chain is tRNA dimethylallyltransferase from Neisseria gonorrhoeae (strain ATCC 700825 / FA 1090).